Consider the following 181-residue polypeptide: Der GTPase-activating protein YihI (181 aa).

Disordered regions lie at residues M1–P75 and E145–G181. Positions R32 to L43 are enriched in basic residues. Positions P146–E155 are enriched in acidic residues. Residues A156–D165 show a composition bias toward basic and acidic residues. The span at D166 to G181 shows a compositional bias: acidic residues.

The protein belongs to the YihI family. As to quaternary structure, interacts with Der.

A GTPase-activating protein (GAP) that modifies Der/EngA GTPase function. May play a role in ribosome biogenesis. This Vibrio vulnificus (strain YJ016) protein is Der GTPase-activating protein YihI.